The following is a 243-amino-acid chain: Ras-related protein Rab-12 (243 aa).

The residue at position 1 (methionine 1) is an N-acetylmethionine. A disordered region spans residues 1–36 (MDPSAALHRRPAGGGLGAVSPALSGGQARRRKQPPR). 2 positions are modified to phosphoserine: serine 20 and serine 24. GTP contacts are provided by glycine 51, valine 52, glycine 53, lysine 54, threonine 55, serine 72, and threonine 73. Threonine 55 is a Mg(2+) binding site. 2 consecutive short sequence motifs (switch) follow at residues 64 to 78 (DTFCEACKSTVGVDF) and 96 to 113 (DTAGQERFNSITSAYYRS). Residues threonine 73 and aspartate 96 each contribute to the Mg(2+) site. Glycine 99 serves as a coordination point for GTP. Serine 105 carries the post-translational modification Phosphoserine. GTP-binding residues include asparagine 154, lysine 155, aspartate 157, serine 185, alanine 186, and lysine 187. Residues cysteine 242 and cysteine 243 are each lipidated (S-geranylgeranyl cysteine).

Belongs to the small GTPase superfamily. Rab family. As to quaternary structure, interacts with RABIF and OPTN. Interacts with LRRK2; interaction facilitates phosphorylation of Ser-105. Interacts with GDI1, GDI2 and CHM; these interactions are disrupted by phosphorylation on Ser-105. Interacts with RILPL1 and RILPL2; these interactions are dependent on phosphorylation of Ser-105. It depends on Mg(2+) as a cofactor. In terms of processing, phosphorylation of Ser-105 in the switch II region by LRRK2 prevents the association of RAB regulatory proteins, including CHM and RAB GDP dissociation inhibitors GDI1 and GDI2. Highest levels in skeletal and cardiac muscle. Also found in comparable amounts in brain, spinal cord and lung. Also detected in testis where it is expressed by Sertoli cells of the seminiferous tubules (at protein level).

The protein resides in the recycling endosome membrane. It is found in the lysosome membrane. The protein localises to the golgi apparatus membrane. Its subcellular location is the cytoplasmic vesicle. It localises to the autophagosome. The catalysed reaction is GTP + H2O = GDP + phosphate + H(+). With respect to regulation, regulated by guanine nucleotide exchange factors (GEFs) including DENND3 which promote the exchange of bound GDP for free GTP. Regulated by GTPase activating proteins (GAPs) which increase the GTP hydrolysis activity. Inhibited by GDP dissociation inhibitors (GDIs). Its function is as follows. The small GTPases Rab are key regulators of intracellular membrane trafficking, from the formation of transport vesicles to their fusion with membranes. Rabs cycle between an inactive GDP-bound form and an active GTP-bound form that is able to recruit to membranes different sets of downstream effectors directly responsible for vesicle formation, movement, tethering and fusion. RAB12 may play a role in protein transport from recycling endosomes to lysosomes regulating, for instance, the degradation of the transferrin receptor. Involved in autophagy. This chain is Ras-related protein Rab-12, found in Rattus norvegicus (Rat).